A 369-amino-acid polypeptide reads, in one-letter code: Phosphatidylglycerol--prolipoprotein diacylglyceryl transferase (369 aa).

The next 3 helical transmembrane spans lie at tyrosine 26–leucine 46, tyrosine 60–glycine 80, and leucine 97–isoleucine 117. Arginine 167 contacts a 1,2-diacyl-sn-glycero-3-phospho-(1'-sn-glycerol). The next 2 helical transmembrane spans lie at valine 216 to leucine 236 and phenylalanine 273 to phenylalanine 293.

The protein belongs to the Lgt family.

The protein resides in the cell membrane. It catalyses the reaction L-cysteinyl-[prolipoprotein] + a 1,2-diacyl-sn-glycero-3-phospho-(1'-sn-glycerol) = an S-1,2-diacyl-sn-glyceryl-L-cysteinyl-[prolipoprotein] + sn-glycerol 1-phosphate + H(+). Its pathway is protein modification; lipoprotein biosynthesis (diacylglyceryl transfer). Catalyzes the transfer of the diacylglyceryl group from phosphatidylglycerol to the sulfhydryl group of the N-terminal cysteine of a prolipoprotein, the first step in the formation of mature lipoproteins. This Mycoplasmoides gallisepticum (strain R(low / passage 15 / clone 2)) (Mycoplasma gallisepticum) protein is Phosphatidylglycerol--prolipoprotein diacylglyceryl transferase.